Reading from the N-terminus, the 324-residue chain is Lactonase drp35 (324 aa).

10 residues coordinate Ca(2+): Glu47, Ser109, Gly111, Asp129, Thr132, Tyr134, Asp137, Asn184, Asp235, and Ser236. Asp235 functions as the Proton donor in the catalytic mechanism.

This sequence belongs to the SMP-30/CGR1 family. Requires Ca(2+) as cofactor.

The protein resides in the cytoplasm. Exhibits lactonase activity. Acts in cells with perturbed membrane integrity and is possibly related to the membrane homeostasis. This Staphylococcus aureus (strain MW2) protein is Lactonase drp35 (drp35).